The chain runs to 304 residues: MLIKTLENLVTEGRNKNTLQIDKEDTLGIIELINNEDKTVAYAVEEQKESIAKAVNIIVDRMKQGGRLFYIGAGTSGRIGILDATECPPTYGVDFELVQAIIAGGNQAIFKAIEGAEDDKELGKQDIIDRGVTSKDVICGIAASGRTPYVIGAMEYAKELGCAVLSITMNPNSEMSKKADLPINIIVGAEVIMGSTRMKSGTAQKMVCNMLTTASMVKMGKVYSNLMVDVKTSNEKLVERAKRIIMIATNVKYDVAEKFLEEADNSVKLAIFMIKSGLDKDSAKSILDRQEGYISEALKSIEKL.

In terms of domain architecture, SIS spans 58–221; it reads IVDRMKQGGR…TTASMVKMGK (164 aa). Glutamate 86 serves as the catalytic Proton donor. The active site involves glutamate 117.

Belongs to the GCKR-like family. MurNAc-6-P etherase subfamily. As to quaternary structure, homodimer.

It carries out the reaction N-acetyl-D-muramate 6-phosphate + H2O = N-acetyl-D-glucosamine 6-phosphate + (R)-lactate. Its pathway is amino-sugar metabolism; N-acetylmuramate degradation. Specifically catalyzes the cleavage of the D-lactyl ether substituent of MurNAc 6-phosphate, producing GlcNAc 6-phosphate and D-lactate. The polypeptide is N-acetylmuramic acid 6-phosphate etherase (Clostridioides difficile (strain 630) (Peptoclostridium difficile)).